The chain runs to 622 residues: Dehydrogenase xptC (622 aa).

A signal peptide spans 1 to 18 (MAKLSVILLFRSLLLCGA). FAD-binding positions include 47 to 48 (VS), 68 to 69 (EA), and 123 to 126 (NAMI). Asn-160, Asn-173, Asn-357, Asn-364, and Asn-480 each carry an N-linked (GlcNAc...) asparagine glycan. Residue 598–599 (PM) coordinates FAD.

This sequence belongs to the GMC oxidoreductase family. Homodimer. FAD serves as cofactor.

It functions in the pathway secondary metabolite biosynthesis. Dehydrogenase involved in the conversion of monodictyphenone to the prenyl xanthones such as emericellin, shamixanthone and epishamixanthone. Monodictyphenone is first converted to variecoxanthone A via a paeciloxanthone intermediate by the consecutive actions of the FAD-dependent monooxygenase mdpD and the xanthone prenyltransferase xptB. XptB catalyzes regular O-prenylation at the hydroxy group of C-7 of the xanthone ring. Variecoxanthone A is further prenylated to emericellin by xptA before being reduced to shamixanthone and epishamixanthone by the dehydrogenase xptC. The polypeptide is Dehydrogenase xptC (Emericella nidulans (strain FGSC A4 / ATCC 38163 / CBS 112.46 / NRRL 194 / M139) (Aspergillus nidulans)).